The chain runs to 401 residues: S-adenosylmethionine synthase (401 aa).

Residue 137–142 participates in ATP binding; that stretch reads GQGSGD.

This sequence belongs to the AdoMet synthase 2 family. It depends on Mg(2+) as a cofactor.

It catalyses the reaction L-methionine + ATP + H2O = S-adenosyl-L-methionine + phosphate + diphosphate. It functions in the pathway amino-acid biosynthesis; S-adenosyl-L-methionine biosynthesis; S-adenosyl-L-methionine from L-methionine: step 1/1. Catalyzes the formation of S-adenosylmethionine from methionine and ATP. The polypeptide is S-adenosylmethionine synthase (Haloquadratum walsbyi (strain DSM 16790 / HBSQ001)).